Reading from the N-terminus, the 254-residue chain is tRNA (guanine-N(7)-)-methyltransferase (254 aa).

S-adenosyl-L-methionine contacts are provided by Glu82, Glu107, Asp134, and Asp157. Asp157 is a catalytic residue. Residues Lys161, Asp193, and 233–236 contribute to the substrate site; that span reads TKFE.

This sequence belongs to the class I-like SAM-binding methyltransferase superfamily. TrmB family.

It carries out the reaction guanosine(46) in tRNA + S-adenosyl-L-methionine = N(7)-methylguanosine(46) in tRNA + S-adenosyl-L-homocysteine. Its pathway is tRNA modification; N(7)-methylguanine-tRNA biosynthesis. Catalyzes the formation of N(7)-methylguanine at position 46 (m7G46) in tRNA. This Corynebacterium jeikeium (strain K411) protein is tRNA (guanine-N(7)-)-methyltransferase.